We begin with the raw amino-acid sequence, 190 residues long: Elongation factor P-like protein (190 aa).

This sequence belongs to the elongation factor P family.

This is Elongation factor P-like protein from Escherichia fergusonii (strain ATCC 35469 / DSM 13698 / CCUG 18766 / IAM 14443 / JCM 21226 / LMG 7866 / NBRC 102419 / NCTC 12128 / CDC 0568-73).